The primary structure comprises 403 residues: Dual-specificity RNA methyltransferase RlmN (403 aa).

Glu126 (proton acceptor) is an active-site residue. In terms of domain architecture, Radical SAM core spans 132 to 375 (ETDRGTLCVS…VRTPRGRDIL (244 aa)). Cys139 and Cys378 are disulfide-bonded. [4Fe-4S] cluster contacts are provided by Cys146, Cys150, and Cys153. S-adenosyl-L-methionine is bound by residues 204–205 (GE), Ser236, 258–260 (SLH), and Asn335. Cys378 serves as the catalytic S-methylcysteine intermediate.

This sequence belongs to the radical SAM superfamily. RlmN family. [4Fe-4S] cluster is required as a cofactor.

It is found in the cytoplasm. The enzyme catalyses adenosine(2503) in 23S rRNA + 2 reduced [2Fe-2S]-[ferredoxin] + 2 S-adenosyl-L-methionine = 2-methyladenosine(2503) in 23S rRNA + 5'-deoxyadenosine + L-methionine + 2 oxidized [2Fe-2S]-[ferredoxin] + S-adenosyl-L-homocysteine. It carries out the reaction adenosine(37) in tRNA + 2 reduced [2Fe-2S]-[ferredoxin] + 2 S-adenosyl-L-methionine = 2-methyladenosine(37) in tRNA + 5'-deoxyadenosine + L-methionine + 2 oxidized [2Fe-2S]-[ferredoxin] + S-adenosyl-L-homocysteine. In terms of biological role, specifically methylates position 2 of adenine 2503 in 23S rRNA and position 2 of adenine 37 in tRNAs. m2A2503 modification seems to play a crucial role in the proofreading step occurring at the peptidyl transferase center and thus would serve to optimize ribosomal fidelity. The chain is Dual-specificity RNA methyltransferase RlmN from Bradyrhizobium sp. (strain BTAi1 / ATCC BAA-1182).